Here is a 275-residue protein sequence, read N- to C-terminus: Probable dual specificity protein phosphatase DDB_G0271350 (275 aa).

The 142-residue stretch at 2–143 (GISMILDNFL…LCDLELKLTN (142 aa)) folds into the Tyrosine-protein phosphatase domain. Catalysis depends on Cys87, which acts as the Phosphocysteine intermediate.

The protein belongs to the protein-tyrosine phosphatase family. Non-receptor class dual specificity subfamily.

The catalysed reaction is O-phospho-L-tyrosyl-[protein] + H2O = L-tyrosyl-[protein] + phosphate. It catalyses the reaction O-phospho-L-seryl-[protein] + H2O = L-seryl-[protein] + phosphate. The enzyme catalyses O-phospho-L-threonyl-[protein] + H2O = L-threonyl-[protein] + phosphate. In terms of biological role, has a dual specificity toward Ser/Thr and Tyr-containing proteins. This chain is Probable dual specificity protein phosphatase DDB_G0271350, found in Dictyostelium discoideum (Social amoeba).